A 72-amino-acid polypeptide reads, in one-letter code: Translation initiation factor IF-1 (72 aa).

The region spanning 1-72 is the S1-like domain; that stretch reads MSKDDVIEVE…TRGRIIYRHK (72 aa).

The protein belongs to the IF-1 family. Component of the 30S ribosomal translation pre-initiation complex which assembles on the 30S ribosome in the order IF-2 and IF-3, IF-1 and N-formylmethionyl-tRNA(fMet); mRNA recruitment can occur at any time during PIC assembly.

It is found in the cytoplasm. Functionally, one of the essential components for the initiation of protein synthesis. Stabilizes the binding of IF-2 and IF-3 on the 30S subunit to which N-formylmethionyl-tRNA(fMet) subsequently binds. Helps modulate mRNA selection, yielding the 30S pre-initiation complex (PIC). Upon addition of the 50S ribosomal subunit IF-1, IF-2 and IF-3 are released leaving the mature 70S translation initiation complex. The polypeptide is Translation initiation factor IF-1 (Carboxydothermus hydrogenoformans (strain ATCC BAA-161 / DSM 6008 / Z-2901)).